A 3583-amino-acid polypeptide reads, in one-letter code: Surfactin synthase subunit 2 (3583 aa).

Carrier domains follow at residues 965–1039 (APKT…EENE), 2005–2080 (APET…EASA), and 3034–3108 (APTT…ERAE). 3 positions are modified to O-(pantetheine 4'-phosphoryl)serine: Ser-999, Ser-2040, and Ser-3069.

This sequence belongs to the ATP-dependent AMP-binding enzyme family. Requires pantetheine 4'-phosphate as cofactor.

It participates in antibiotic biosynthesis; surfactin biosynthesis. Functionally, this protein is a multifunctional enzyme able to activate and polymerize the amino acids Leu, Glu, Asp and Val. Activation sites for these AA consist of individual domains. The protein is Surfactin synthase subunit 2 (srfAB) of Bacillus subtilis (strain 168).